A 207-amino-acid chain; its full sequence is MSCTIEKILTDAKTLLERLREHDAAAESLVDQSAALHRRVAAMREAGTALPDQYQEDASDMKDMSKYKPHILLSQENTQIRDLQQENRELWISLEEHQDALELIMSKYRKQMLQLMVAKKAVDAEPVLKAHQSHSAEIESQIDRICEMGEVMRKAVQVDDDQFCKIQEKLAQLELENKELRELLSISSESLQARKENSMDTASQAIK.

Coiled-coil stretches lie at residues 70–102 (HILL…DALE) and 162–193 (QFCK…SLQA).

This sequence belongs to the SIKE family. As to quaternary structure, interacts with IKBKE and TBK1 via its coiled coil region. Interaction with TBK1 is disrupted upon viral infection or TLR3 stimulation. Interacts with CDC42BPB. Interacts with SIKE1 which mediates association with the STRIPAK core complex composed of PP2A catalytic and scaffolding subunits, the striatins (PP2A regulatory subunits), the striatin-associated proteins MOB4, STRIP1 and STRIP2, PDCD10 and members of the STE20 kinases, such as STK24 and STK26. As to expression, widely expressed. Expressed in brain, heart, skeletal muscle, colon, thymus, spleen, kidney, liver, small intestine, placenta, lung and leukocytes. Present in all cell lines tested (at protein level).

It localises to the cytoplasm. In terms of biological role, physiological suppressor of IKK-epsilon and TBK1 that plays an inhibitory role in virus- and TLR3-triggered IRF3. Inhibits TLR3-mediated activation of interferon-stimulated response elements (ISRE) and the IFN-beta promoter. May act by disrupting the interactions of IKBKE or TBK1 with TICAM1/TRIF, IRF3 and RIGI. Does not inhibit NF-kappa-B activation pathways. Associates with the striatin-interacting phosphatase and kinase (STRIPAK) core complex, forming the extended (SIKE1:SLMAP)STRIPAK complex. The (SIKE1:SLMAP)STRIPAK complex dephosphorylates STK3 leading to the inhibition of Hippo signaling and the control of cell growth. This is Suppressor of IKBKE 1 from Homo sapiens (Human).